Consider the following 430-residue polypeptide: Enolase (430 aa).

Gln162 is a (2R)-2-phosphoglycerate binding site. Residue Glu204 is the Proton donor of the active site. Mg(2+) contacts are provided by Asp242, Glu289, and Asp316. 4 residues coordinate (2R)-2-phosphoglycerate: Lys341, Arg370, Ser371, and Lys392. The active-site Proton acceptor is Lys341.

This sequence belongs to the enolase family. Mg(2+) serves as cofactor.

The protein resides in the cytoplasm. It localises to the secreted. The protein localises to the cell surface. The catalysed reaction is (2R)-2-phosphoglycerate = phosphoenolpyruvate + H2O. It functions in the pathway carbohydrate degradation; glycolysis; pyruvate from D-glyceraldehyde 3-phosphate: step 4/5. In terms of biological role, catalyzes the reversible conversion of 2-phosphoglycerate (2-PG) into phosphoenolpyruvate (PEP). It is essential for the degradation of carbohydrates via glycolysis. This Flavobacterium johnsoniae (strain ATCC 17061 / DSM 2064 / JCM 8514 / BCRC 14874 / CCUG 350202 / NBRC 14942 / NCIMB 11054 / UW101) (Cytophaga johnsonae) protein is Enolase.